The sequence spans 292 residues: Acetylglutamate kinase (292 aa).

Residues 72–73, R94, and N187 contribute to the substrate site; that span reads GG.

The protein belongs to the acetylglutamate kinase family. ArgB subfamily.

It is found in the cytoplasm. The catalysed reaction is N-acetyl-L-glutamate + ATP = N-acetyl-L-glutamyl 5-phosphate + ADP. The protein operates within amino-acid biosynthesis; L-arginine biosynthesis; N(2)-acetyl-L-ornithine from L-glutamate: step 2/4. In terms of biological role, catalyzes the ATP-dependent phosphorylation of N-acetyl-L-glutamate. This is Acetylglutamate kinase from Trichodesmium erythraeum (strain IMS101).